The sequence spans 439 residues: MKQSRIPRDPDGLPPLRAWLVGGGTGGHVYPALAVAAALNAHGAQFVVADTDGGRNRAMSRHTRWSALYVGSVGGMEAALVARESALPFHALPAAAVRGRNPLTMVRNLITLARGTGAAHRLIARDRPAAILGTGGYVCVPVFLAARLACVPTVIYQPDVVPGLAVRLLARLANLVACSVADSGRYLGLTPVDFERAVPQLETQNRTVRLIVTGYPVRQELFHADRRACRAVFGLSDDLPTLLVAGGSRGARSINRAIAALLPSLLPLMEIIHVCGREGDATFLRAAIRVLPENLQKRYHLFEYLHSAPDISGQEGLPSTPTMIAALVAADLAVCRSGASILGELPAVGLPAVLAPYPYVHQDENADYLVQRGAAVKVSDAALADTTEKGSLFRAIYRLLNCPEERRAMAERARALAQPDAAQKLAFLLETLVIRRQTA.

Residues 25–27 (TGG), R218, S248, and Q362 contribute to the UDP-N-acetyl-alpha-D-glucosamine site.

It belongs to the glycosyltransferase 28 family. MurG subfamily.

Its subcellular location is the cell membrane. It carries out the reaction di-trans,octa-cis-undecaprenyl diphospho-N-acetyl-alpha-D-muramoyl-L-alanyl-D-glutamyl-meso-2,6-diaminopimeloyl-D-alanyl-D-alanine + UDP-N-acetyl-alpha-D-glucosamine = di-trans,octa-cis-undecaprenyl diphospho-[N-acetyl-alpha-D-glucosaminyl-(1-&gt;4)]-N-acetyl-alpha-D-muramoyl-L-alanyl-D-glutamyl-meso-2,6-diaminopimeloyl-D-alanyl-D-alanine + UDP + H(+). It participates in cell wall biogenesis; peptidoglycan biosynthesis. Functionally, cell wall formation. Catalyzes the transfer of a GlcNAc subunit on undecaprenyl-pyrophosphoryl-MurNAc-pentapeptide (lipid intermediate I) to form undecaprenyl-pyrophosphoryl-MurNAc-(pentapeptide)GlcNAc (lipid intermediate II). The protein is UDP-N-acetylglucosamine--N-acetylmuramyl-(pentapeptide) pyrophosphoryl-undecaprenol N-acetylglucosamine transferase of Roseiflexus sp. (strain RS-1).